Consider the following 199-residue polypeptide: MSYSGFRVMADSTPTLKKRLSGRSLYLVGMMGSGKTSTGRPLAERLGYGFVDADAVIEQAAGCSIPEIFERDGDAGFRSLESQVLSAISQRHSLVVATGGGVVTQPENWGLLHSGIVIWLDVVPDQLLQRLNADSTVRPLLQTTDPEASLNALLNERRPLYSEADLTVVINDETPEAVADGILQLLPSLLQDPTQRRTD.

ATP is bound at residue G32–S37. A Mg(2+)-binding site is contributed by T36. 3 residues coordinate substrate: D54, R78, and G100. R138 provides a ligand contact to ATP. R157 provides a ligand contact to substrate.

The protein belongs to the shikimate kinase family. As to quaternary structure, monomer. The cofactor is Mg(2+).

The protein resides in the cytoplasm. It carries out the reaction shikimate + ATP = 3-phosphoshikimate + ADP + H(+). It participates in metabolic intermediate biosynthesis; chorismate biosynthesis; chorismate from D-erythrose 4-phosphate and phosphoenolpyruvate: step 5/7. Its function is as follows. Catalyzes the specific phosphorylation of the 3-hydroxyl group of shikimic acid using ATP as a cosubstrate. The sequence is that of Shikimate kinase from Synechococcus sp. (strain CC9605).